A 971-amino-acid polypeptide reads, in one-letter code: Polyamine-modulated factor 1-binding protein 1 (971 aa).

Coiled coils occupy residues 37–69 (NKQY…LQAS), 117–229 (EKLH…ACSN), 282–325 (LHVE…LREE), 355–680 (QKLS…SAIQ), 706–827 (QDDL…DEKE), and 879–916 (IAKL…KAGT).

Expressed in testis and more specifically in ODF, the sperm tail specific cytoskeletal structure. Also expressed in epididymides and brain.

Its subcellular location is the cell projection. The protein resides in the cilium. It is found in the flagellum. Required for normal spermatogenesis. It functions as a scaffold protein that attaches the sperm head-tail connecting piece to the nuclear envelope, thus maintaining sperm head and tail integrity. May also be involved in the general organization of cellular cytoskeleton. The sequence is that of Polyamine-modulated factor 1-binding protein 1 (Pmfbp1) from Rattus norvegicus (Rat).